The sequence spans 377 residues: Putative holocytochrome-c synthase (377 aa).

Disordered stretches follow at residues 1-29 (MTSS…SNEA) and 111-136 (QNSE…KPAG). Residues 7-22 (TTDHPRTGKCPIDHSK) show a composition bias toward basic and acidic residues. 2 HRM repeats span residues 114-119 (EATPAV) and 124-129 (TCPMSN).

This sequence belongs to the cytochrome c-type heme lyase family.

It localises to the mitochondrion inner membrane. The protein resides in the mitochondrion intermembrane space. The catalysed reaction is holo-[cytochrome c] = apo-[cytochrome c] + heme b. Functionally, lyase that catalyzes the covalent linking of the heme group to the cytochrome C apoprotein to produce the mature functional cytochrome. The polypeptide is Putative holocytochrome-c synthase (Schizosaccharomyces pombe (strain 972 / ATCC 24843) (Fission yeast)).